The primary structure comprises 784 residues: Rabenosyn-5 (784 aa).

Ala-2 carries the post-translational modification N-acetylalanine. Ser-3 carries the post-translational modification Phosphoserine. The segment at 14-37 (FLCPLCLKDLQSFYQLHSHYEEEH) adopts a C2H2-type zinc-finger fold. The interval 100-263 (RSHLSDFKKH…HCKDTLLKRE (164 aa)) is necessary for the correct targeting to endosomes. The FYVE-type zinc-finger motif lies at 157 to 260 (DQDVPFCPDC…CCTHCKDTLL (104 aa)). Zn(2+) contacts are provided by Cys-163, Cys-166, Cys-179, Cys-182, Cys-187, and Cys-190. The segment covering 207-224 (KESLSTHTSPSQSPNSVH) has biased composition (polar residues). Positions 207 to 241 (KESLSTHTSPSQSPNSVHGSRRGSISSMSSVSSVL) are disordered. Residues Ser-215, Ser-219, Ser-226, and Ser-230 each carry the phosphoserine modification. The segment covering 228–240 (RGSISSMSSVSSV) has biased composition (low complexity). Zn(2+)-binding residues include Cys-252 and Cys-255. The interval 264–500 (QQIDEKEHTP…QLQDEYDQQQ (237 aa)) is necessary for interaction with RAB4A. The necessary for interaction with EHD1 stretch occupies residues 264–784 (QQIDEKEHTP…TLAKQKGGTD (521 aa)). 2 coiled-coil regions span residues 378-414 (TKEQ…LEER) and 472-531 (QAKA…RELE). Residues 390–400 (KEEMERKRAVE) are compositionally biased toward basic and acidic residues. Residues 390-429 (KEEMERKRAVERQAALESQRRLEERQSGLASRAANGEVAS) are disordered. The region spanning 496–515 (YDQQQTEKAIELSRRQAEEE) is the UIM domain. The disordered stretch occupies residues 574 to 732 (DLGSSPVPSS…DSDSGPEAEE (159 aa)). Residues 579-598 (PVPSSTAPKTPSLSSTQPTR) are compositionally biased toward polar residues. Residues 627-784 (PFDEEDLSSP…TLAKQKGGTD (158 aa)) are necessary for interaction with RAB5A. A compositionally biased stretch (acidic residues) spans 663-673 (PFEEEDEEEEA). Ser-684 is subject to Phosphoserine. The segment covering 722-732 (MDSDSGPEAEE) has biased composition (acidic residues).

In terms of assembly, interacts with EHD1, RAB4A, RAB5A, RAB14, RAB22A, RAB24 and VPS45. Binds simultaneously to RAB4A and RAB5A in vitro. Interacts with RAB4A and RAB5A that has been activated by GTP binding.

It localises to the cell membrane. Its subcellular location is the early endosome membrane. In terms of biological role, rab4/Rab5 effector protein acting in early endocytic membrane fusion and membrane trafficking of recycling endosomes. Required for endosome fusion either homotypically or with clathrin coated vesicles. Plays a role in the lysosomal trafficking of CTSD/cathepsin D from the Golgi to lysosomes. Also promotes the recycling of transferrin directly from early endosomes to the plasma membrane. Binds phospholipid vesicles containing phosphatidylinositol 3-phosphate (PtdInsP3). Plays a role in the recycling of transferrin receptor to the plasma membrane. This Homo sapiens (Human) protein is Rabenosyn-5.